The primary structure comprises 738 residues: Interleukin-17 receptor D (738 aa).

The N-terminal stretch at 1 to 16 is a signal peptide; sequence MAPWLQLCSFFFTVNA. Residues 17 to 299 are Extracellular-facing; it reads CLNGSQLAVA…VQSPWAGPIR (283 aa). N-linked (GlcNAc...) asparagine glycosylation is found at N19, N55, N62, N80, N137, N171, N206, and N277. Residues 300–320 form a helical membrane-spanning segment; it reads AVAITVPLVVISAFATLFTVM. The Cytoplasmic portion of the chain corresponds to 321 to 738; sequence CRKKQQENIY…TDELQALAPL (418 aa). The SEFIR domain maps to 355 to 509; that stretch reads QPKVFLCYSN…LMDHLPELCA (155 aa). A disordered region spans residues 653–738; the sequence is GSPSEMPRDS…TDELQALAPL (86 aa). The span at 667–702 shows a compositional bias: low complexity; that stretch reads SSVPSSELSLPLMEGLSPDQIETSSLTESVSSSSGL. Residues 720 to 731 show a composition bias toward basic and acidic residues; the sequence is SREHGCHSHTDE.

In terms of assembly, self-associates. Interacts with FGFR2 and phosphorylated MAP2K1 or MAP2K2. Associates with a MAP2K1/2-MAPK1/3 complex. Interacts with FGFR1 and MAP3K7.

The protein resides in the golgi apparatus membrane. Its subcellular location is the cell membrane. In terms of biological role, feedback inhibitor of fibroblast growth factor mediated Ras-MAPK signaling and ERK activation. Regulates the nuclear ERK signaling pathway by spatially blocking nuclear translocation of activated ERK. Mediates JNK activation and may be involved in apoptosis. May inhibit FGF-induced FGFR1 tyrosine phosphorylation. Might have a role in the early stages of fate specification of GnRH-secreting neurons. Inhibits TGFB-induced epithelial-to-mesenchymal transition in lens epithelial cells. This Mus musculus (Mouse) protein is Interleukin-17 receptor D (Il17rd).